The chain runs to 148 residues: Glutamate mutase sigma subunit (148 aa).

The region spanning 3–140 is the B12-binding domain; that stretch reads NPTIVIGVIG…KRDIERVMQS (138 aa). Residues 13–17, His16, 61–63, and 93–97 each bind adenosylcob(III)alamin; these read ADCHA, SSI, and NLVIG.

The protein belongs to the methylaspartate mutase GlmS subunit family. Heterotetramer composed of 2 epsilon subunits (GlmE) and 2 sigma subunits (GlmS). GlmE exists as a homodimer and GlmS as a monomer. Adenosylcob(III)alamin serves as cofactor.

It carries out the reaction (2S,3S)-3-methyl-L-aspartate = L-glutamate. The protein operates within amino-acid degradation; L-glutamate degradation via mesaconate pathway; acetate and pyruvate from L-glutamate: step 1/4. Catalyzes the carbon skeleton rearrangement of L-glutamate to L-threo-3-methylaspartate ((2S,3S)-3-methylaspartate). In Yersinia enterocolitica serotype O:8 / biotype 1B (strain NCTC 13174 / 8081), this protein is Glutamate mutase sigma subunit.